We begin with the raw amino-acid sequence, 189 residues long: Dual specificity phosphatase 21 (189 aa).

A Tyrosine-protein phosphatase domain is found at 20–161 (GLSQITASLF…LIHYEFKLFS (142 aa)). The tract at residues 43-128 (SNNHITTIIN…YLMKYHNMTL (86 aa)) is sufficient for mitochondrial localization. The active-site Phosphocysteine intermediate is the C105.

This sequence belongs to the protein-tyrosine phosphatase family. Non-receptor class dual specificity subfamily. Microtubule inner protein component of sperm flagellar doublet microtubules. In terms of tissue distribution, selectively expressed in testis.

The protein localises to the cytoplasm. It is found in the nucleus. The protein resides in the mitochondrion inner membrane. It localises to the cytoskeleton. Its subcellular location is the flagellum axoneme. It carries out the reaction O-phospho-L-tyrosyl-[protein] + H2O = L-tyrosyl-[protein] + phosphate. The enzyme catalyses O-phospho-L-seryl-[protein] + H2O = L-seryl-[protein] + phosphate. It catalyses the reaction O-phospho-L-threonyl-[protein] + H2O = L-threonyl-[protein] + phosphate. Protein phosphatase component of the sperm flagellar doublet microtubules. May act as a regulator of sperm motility by mediating dephosphorylation of sperm doublet microtubule proteins. Can dephosphorylate single and diphosphorylated synthetic MAPK peptides, with preference for the phosphotyrosine and diphosphorylated forms over phosphothreonine. The polypeptide is Dual specificity phosphatase 21 (Mus musculus (Mouse)).